Reading from the N-terminus, the 498-residue chain is Lysine--tRNA ligase (498 aa).

Residues Glu409 and Glu416 each coordinate Mg(2+).

It belongs to the class-II aminoacyl-tRNA synthetase family. As to quaternary structure, homodimer. It depends on Mg(2+) as a cofactor.

It localises to the cytoplasm. It carries out the reaction tRNA(Lys) + L-lysine + ATP = L-lysyl-tRNA(Lys) + AMP + diphosphate. The sequence is that of Lysine--tRNA ligase from Teredinibacter turnerae (strain ATCC 39867 / T7901).